Here is a 249-residue protein sequence, read N- to C-terminus: Probable transcriptional regulatory protein AB57_1731 (249 aa).

Belongs to the TACO1 family.

Its subcellular location is the cytoplasm. The chain is Probable transcriptional regulatory protein AB57_1731 from Acinetobacter baumannii (strain AB0057).